The chain runs to 188 residues: Adenine phosphoribosyltransferase (188 aa).

This sequence belongs to the purine/pyrimidine phosphoribosyltransferase family. In terms of assembly, homodimer.

It localises to the cytoplasm. It catalyses the reaction AMP + diphosphate = 5-phospho-alpha-D-ribose 1-diphosphate + adenine. The protein operates within purine metabolism; AMP biosynthesis via salvage pathway; AMP from adenine: step 1/1. In terms of biological role, catalyzes a salvage reaction resulting in the formation of AMP, that is energically less costly than de novo synthesis. The sequence is that of Adenine phosphoribosyltransferase from Neisseria meningitidis serogroup B (strain ATCC BAA-335 / MC58).